The chain runs to 1488 residues: Chromosome partition protein MukB (1488 aa).

34-41 (GGNGAGKS) is a binding site for ATP. Coiled coils occupy residues 326-413 (LEAD…QTRA), 444-472 (LDTF…QTAH), and 509-602 (RHLA…RRAP). Positions 666 to 783 (PGGAEDQRLN…SLPIFGRAAR (118 aa)) are flexible hinge. 3 coiled-coil regions span residues 835–923 (EAEI…AKLE), 977–1116 (EMLS…AKAG), and 1209–1265 (VEAI…LQSV).

It belongs to the SMC family. MukB subfamily. As to quaternary structure, homodimerization via its hinge domain. Binds to DNA via its C-terminal region. Interacts, and probably forms a ternary complex, with MukE and MukF via its C-terminal region. The complex formation is stimulated by calcium or magnesium. Interacts with tubulin-related protein FtsZ.

Its subcellular location is the cytoplasm. It localises to the nucleoid. In terms of biological role, plays a central role in chromosome condensation, segregation and cell cycle progression. Functions as a homodimer, which is essential for chromosome partition. Involved in negative DNA supercoiling in vivo, and by this means organize and compact chromosomes. May achieve or facilitate chromosome segregation by condensation DNA from both sides of a centrally located replisome during cell division. This Salmonella paratyphi C (strain RKS4594) protein is Chromosome partition protein MukB.